The sequence spans 176 residues: Small ribosomal subunit protein uS5 (176 aa).

The S5 DRBM domain maps to 11–74 (LSEVLVDVNR…QAAKKRMMKV (64 aa)).

It belongs to the universal ribosomal protein uS5 family. Part of the 30S ribosomal subunit. Contacts proteins S4 and S8.

In terms of biological role, with S4 and S12 plays an important role in translational accuracy. Located at the back of the 30S subunit body where it stabilizes the conformation of the head with respect to the body. In Rickettsia peacockii (strain Rustic), this protein is Small ribosomal subunit protein uS5.